Here is a 201-residue protein sequence, read N- to C-terminus: Glutathione peroxidase 1 (201 aa).

Position 32 is a phosphoserine (Ser32). Sec47 is a catalytic residue. Residue Sec47 is a non-standard amino acid, selenocysteine. 3 positions are modified to N6-acetyllysine; alternate: Lys86, Lys112, and Lys146. N6-succinyllysine; alternate occurs at positions 86, 112, and 146. Phosphoserine is present on residues Ser195 and Ser199.

The protein belongs to the glutathione peroxidase family. Homotetramer. Interacts with MIEN1. During periods of oxidative stress, Sec-47 may react with a superoxide radical, irreversibly lose hydroselenide and be converted to dehydroalanine.

The protein localises to the cytoplasm. Its subcellular location is the mitochondrion. The catalysed reaction is 2 glutathione + H2O2 = glutathione disulfide + 2 H2O. It carries out the reaction a hydroperoxy polyunsaturated fatty acid + 2 glutathione = a hydroxy polyunsaturated fatty acid + glutathione disulfide + H2O. It catalyses the reaction tert-butyl hydroperoxide + 2 glutathione = tert-butanol + glutathione disulfide + H2O. The enzyme catalyses cumene hydroperoxide + 2 glutathione = 2-phenylpropan-2-ol + glutathione disulfide + H2O. The catalysed reaction is (13S)-hydroperoxy-(9Z,11E)-octadecadienoate + 2 glutathione = (13S)-hydroxy-(9Z,11E)-octadecadienoate + glutathione disulfide + H2O. It carries out the reaction (9S)-hydroperoxy-(10E,12Z)-octadecadienoate + 2 glutathione = (9S)-hydroxy-(10E,12Z)-octadecadienoate + glutathione disulfide + H2O. It catalyses the reaction (5S)-hydroperoxy-(6E,8Z,11Z,14Z)-eicosatetraenoate + 2 glutathione = (5S)-hydroxy-(6E,8Z,11Z,14Z)-eicosatetraenoate + glutathione disulfide + H2O. The enzyme catalyses (12S)-hydroperoxy-(5Z,8Z,10E,14Z)-eicosatetraenoate + 2 glutathione = (12S)-hydroxy-(5Z,8Z,10E,14Z)-eicosatetraenoate + glutathione disulfide + H2O. The catalysed reaction is (12R)-hydroperoxy-(5Z,8Z,10E,14Z)-eicosatetraenoate + 2 glutathione = (12R)-hydroxy-(5Z,8Z,10E,14Z)-eicosatetraenoate + glutathione disulfide + H2O. It carries out the reaction (15S)-hydroperoxy-(5Z,8Z,11Z,13E)-eicosatetraenoate + 2 glutathione = (15S)-hydroxy-(5Z,8Z,11Z,13E)-eicosatetraenoate + glutathione disulfide + H2O. It catalyses the reaction (5S)-hydroperoxy-(6E,8Z,11Z,14Z,17Z)-eicosapentaenoate + 2 glutathione = (5S)-hydroxy-(6E,8Z,11Z,14Z,17Z)-eicosapentaenoate + glutathione disulfide + H2O. The enzyme catalyses (12S)-hydroperoxy-(5Z,8Z,10E,14Z,17Z)-eicosapentaenoate + 2 glutathione = (12S)-hydroxy-(5Z,8Z,10E,14Z,17Z)-eicosapentaenoate + glutathione disulfide + H2O. The catalysed reaction is (15S)-hydroperoxy-(5Z,8Z,11Z,13E,17Z)-eicosapentaenoate + 2 glutathione = (15S)-hydroxy-(5Z,8Z,11Z,13E,17Z)-eicosapentaenoate + glutathione disulfide + H2O. It carries out the reaction (15S)-hydroperoxy-(11Z,13E)-eicosadienoate + 2 glutathione = (15S)-hydroxy-(11Z,13E)-eicosadienoate + glutathione disulfide + H2O. It catalyses the reaction (17S)-hydroperoxy-(4Z,7Z,10Z,13Z,15E,19Z)-docosahexaenoate + 2 glutathione = (17S)-hydroxy-(4Z,7Z,10Z,13Z,15E,19Z)-docosahexaenoate + glutathione disulfide + H2O. Catalyzes the reduction of hydroperoxides in a glutathione-dependent manner thus regulating cellular redox homeostasis. Can reduce small soluble hydroperoxides such as H2O2, cumene hydroperoxide and tert-butyl hydroperoxide, as well as several fatty acid-derived hydroperoxides. In platelets catalyzes the reduction of 12-hydroperoxyeicosatetraenoic acid, the primary product of the arachidonate 12-lipoxygenase pathway. In Pan troglodytes (Chimpanzee), this protein is Glutathione peroxidase 1 (GPX1).